The chain runs to 397 residues: MSKIIAVNAGSSTLKFKLYEMPEENVLAEGVIERIALPASHVEIKYGDGKKYEKTTDVKNHEQAIQILLDQLLDLDIIKEYSEINGVGHRVVAGGEYFDKSVVITPDVLKKIESLTELAPLHEPANVLGIKAFKKVLPDIISVAVFDTAFHATLPEKNFLYSLPYEYYEKYSARKYGFHGIGNRYVSQRAAELLGKPAEDLKMIITHLGAGASICPVKNGKSFDTSMGFTPVTGITMATRSGDVDPSLLAYVMEKEGMTDINEMIKVLNTKSGLLGISGVSADMREVEAAQATNPRAKVAREIYVNRIIRYVGAYLAEMGGADAIVFTAGVGENSITIRKEVAEGLNYFGIGVDNEKNDVRGVVRDISAKDSKIKTLLVPTDEELMIVRDVQTLANK.

Asn8 is a Mg(2+) binding site. Lys15 is an ATP binding site. Arg90 serves as a coordination point for substrate. Asp147 functions as the Proton donor/acceptor in the catalytic mechanism. ATP-binding positions include 207–211 (HLGAG), 283–285 (DMR), and 330–334 (GVGEN). Mg(2+) is bound at residue Glu383.

It belongs to the acetokinase family. Homodimer. The cofactor is Mg(2+). It depends on Mn(2+) as a cofactor.

It localises to the cytoplasm. It catalyses the reaction acetate + ATP = acetyl phosphate + ADP. It functions in the pathway metabolic intermediate biosynthesis; acetyl-CoA biosynthesis; acetyl-CoA from acetate: step 1/2. Its function is as follows. Catalyzes the formation of acetyl phosphate from acetate and ATP. Can also catalyze the reverse reaction. The sequence is that of Acetate kinase from Fructilactobacillus sanfranciscensis (Lactobacillus sanfranciscensis).